The following is an 838-amino-acid chain: MSASRSRNKQSKLCDDERLDISKDEFNRFQEAFGQEEFRKLFFDYVDEIQDPENRKIYEAEITQLEKERGVEVRFIHPKPGFVIKTALDGELKCFINIASSEEIERPKNEVATDPSSGSRGLNWSIPMAQTTSRDDFDAKNNHCKVFDVVFHPDALHLAMRNKQFRQCLIDTALDAVEREYKVSLDRANLKFPKLDYKGIPRPTVIRKMSDNPTAEEQEPHPLAHMFPTKPPAPGKPEPRVLPMKTKPTPVPEFTVPRYTIKHSHDVDLSEYTDELDAKLHVTVPRSLVVEIELPLLRSTAECQLDVTSKSVYLFSERQGAKYRLKLDLPFIVDDKAGRARFDTDMRRLSITLPVVRKSVQEQAQMHETLRHFSREDSGVELHSNSESPVEEDPDGELSDSKADISKTSSPTVVRNANSPFLKSSVHYQLPSKFDCNVLDNVMAFVLHVPNVQPDSIEQLREQRSLHLKFATIGSGYYPTHYAFYVELSADHEDSAIESAEAEAWDNNVVLKLYLNSQSETPAGYLAGLDATELKEYPVHGQYHVKSKEKVNAKKENAPLDVEFERNQEGHALKVTIRPGTKEEEEEEEDKENQDQKPESDQQQQQQVQNKKSGKKQRKRNKKERSLSESACADMVLQEPLAKSNELQPRATFKLPPQRKQRSYSESNDSTGRSHRGILKRFSRYGPRPSMSDSCSSIDDSSSYSCSVDASGASLFSQSFGGIPEEDRSDAGLSESCKKTVRFNDHIMKQVFRLDSSILGQRKKNQKRRDLKLRAQQRRLSEGDSVDYEETRGSALKQKENPSRNCTDSGLDLTGAAGAHSNNNESDAKNAMMFEMDD.

Disordered regions lie at residues 106 to 125 (RPKN…LNWS), 212 to 238 (NPTA…GKPE), 370 to 411 (LRHF…TSSP), 557 to 696 (NAPL…DSCS), and 776 to 838 (QQRR…EMDD). The span at 114–125 (DPSSGSRGLNWS) shows a compositional bias: polar residues. The span at 370 to 380 (LRHFSREDSGV) shows a compositional bias: basic and acidic residues. The residue at position 378 (Ser378) is a Phosphoserine. Residues 389–398 (PVEEDPDGEL) are compositionally biased toward acidic residues. A compositionally biased stretch (basic and acidic residues) spans 557-572 (NAPLDVEFERNQEGHA). Acidic residues predominate over residues 583-592 (EEEEEEEDKE). A compositionally biased stretch (low complexity) spans 601-611 (DQQQQQQVQNK). Composition is skewed to basic residues over residues 612 to 623 (KSGKKQRKRNKK) and 673 to 683 (RSHRGILKRFS). Ser781 carries the phosphoserine modification. Over residues 789 to 802 (EETRGSALKQKENP) the composition is skewed to basic and acidic residues.

Belongs to the PIH1 family. Kintoun subfamily. As to quaternary structure, interacts with Pp1alpha-96A, Pp1-87B, Pp1-13C and flw.

The protein resides in the cytoplasm. Functionally, required for cytoplasmic pre-assembly of axonemal dyneins, thereby playing a central role in motility in cilia and flagella. Involved in pre-assembly of dynein arm complexes in the cytoplasm before intraflagellar transport loads them for the ciliary compartment. This chain is Protein kintoun, found in Drosophila sechellia (Fruit fly).